Consider the following 189-residue polypeptide: uncharacterized protein (189 aa).

A signal peptide spans 1-20 (MKFSTVGFLFSTILFKSAFA). Residues 74-109 (KKNEVLVDVLKKCDPSGNRRITLDEFLAFRKNGGEL) enclose the EF-hand domain. Positions 87, 89, 91, 93, and 98 each coordinate Ca(2+).

Its subcellular location is the endoplasmic reticulum lumen. The protein localises to the golgi apparatus lumen. This is an uncharacterized protein from Schizosaccharomyces pombe (strain 972 / ATCC 24843) (Fission yeast).